The following is a 321-amino-acid chain: Bifunctional ligase/repressor BirA (321 aa).

A DNA-binding region (H-T-H motif) is located at residues 22-41 (GEQLGETLGMSRAAINKHIQ). One can recognise a BPL/LPL catalytic domain in the interval 67–254 (LNAKQILGQL…ELRAALELFE (188 aa)). Biotin is bound by residues 89-91 (STN), glutamine 112, 116-118 (RGR), and lysine 183.

It belongs to the biotin--protein ligase family. In terms of assembly, monomer in solution. Interacts with BCCP. Homodimerizes to bind DNA. Interaction with the corepressor bio-5'-AMP increases dimerization.

The catalysed reaction is biotin + L-lysyl-[protein] + ATP = N(6)-biotinyl-L-lysyl-[protein] + AMP + diphosphate + H(+). Its activity is regulated as follows. The switch between the enzymatic activity and the repressor activity is regulated by cellular demand for biotin. The switch occurs by swapping of protein interaction partners by holoBirA. In conditions of high biotin demand, holoBirA associates with apoBCCP to transfer biotin. In conditions of low biotin demand, holoBirA dimerizes, binds DNA and represses transcription of the biotin operon. Acts both as a biotin--[acetyl-CoA-carboxylase] ligase and a biotin-operon repressor. In the presence of ATP, BirA activates biotin to form the BirA-biotinyl-5'-adenylate (BirA-bio-5'-AMP or holoBirA) complex. HoloBirA can either transfer the biotinyl moiety to the biotin carboxyl carrier protein (BCCP) subunit of acetyl-CoA carboxylase, or bind to the biotin operator site and inhibit transcription of the operon. This is Bifunctional ligase/repressor BirA from Escherichia coli (strain K12).